The following is a 425-amino-acid chain: Serine hydroxymethyltransferase 2 (425 aa).

(6S)-5,6,7,8-tetrahydrofolate contacts are provided by residues Leu-121 and Gly-125–Leu-127. Lys-230 bears the N6-(pyridoxal phosphate)lysine mark.

The protein belongs to the SHMT family. In terms of assembly, homodimer. Requires pyridoxal 5'-phosphate as cofactor.

The protein resides in the cytoplasm. The enzyme catalyses (6R)-5,10-methylene-5,6,7,8-tetrahydrofolate + glycine + H2O = (6S)-5,6,7,8-tetrahydrofolate + L-serine. It functions in the pathway one-carbon metabolism; tetrahydrofolate interconversion. The protein operates within amino-acid biosynthesis; glycine biosynthesis; glycine from L-serine: step 1/1. In terms of biological role, catalyzes the reversible interconversion of serine and glycine with tetrahydrofolate (THF) serving as the one-carbon carrier. This reaction serves as the major source of one-carbon groups required for the biosynthesis of purines, thymidylate, methionine, and other important biomolecules. Also exhibits THF-independent aldolase activity toward beta-hydroxyamino acids, producing glycine and aldehydes, via a retro-aldol mechanism. The polypeptide is Serine hydroxymethyltransferase 2 (Mycobacterium bovis (strain ATCC BAA-935 / AF2122/97)).